The chain runs to 379 residues: Putative acetyl-CoA C-acetyltransferase VraB (379 aa).

The active-site Acyl-thioester intermediate is the cysteine 86. Catalysis depends on histidine 338, which acts as the Proton acceptor.

It belongs to the thiolase-like superfamily. Thiolase family.

The chain is Putative acetyl-CoA C-acetyltransferase VraB (vraB) from Staphylococcus aureus (strain MRSA252).